Here is a 373-residue protein sequence, read N- to C-terminus: Cell surface Cu-only superoxide dismutase ARB_03674 (373 aa).

A signal peptide spans Met-1–Leu-55. N-linked (GlcNAc...) asparagine glycosylation is found at Asn-75 and Asn-141. Positions 194, 196, and 212 each coordinate Cu cation. The cysteines at positions 206 and 289 are disulfide-linked. Residues Asn-254 and Asn-274 are each glycosylated (N-linked (GlcNAc...) asparagine). His-280 lines the Cu cation pocket. Residues Asn-283 and Asn-291 are each glycosylated (N-linked (GlcNAc...) asparagine). Residues Gly-329–Ala-348 are disordered. The segment covering Ala-331–Pro-340 has biased composition (low complexity). Residue Gly-352 is the site of GPI-anchor amidated glycine attachment. Residues Ala-353 to Leu-373 constitute a propeptide, removed in mature form.

Belongs to the Cu-Zn superoxide dismutase family. As to quaternary structure, monomer. The cofactor is Cu cation. In terms of processing, the GPI-anchor is attached to the protein in the endoplasmic reticulum and serves to target the protein to the cell surface. There, the glucosamine-inositol phospholipid moiety is cleaved off and the GPI-modified mannoprotein is covalently attached via its lipidless GPI glycan remnant to the 1,6-beta-glucan of the outer cell wall layer.

It localises to the secreted. The protein resides in the cell wall. It is found in the cell membrane. It carries out the reaction 2 superoxide + 2 H(+) = H2O2 + O2. Superoxide dismutases serve to convert damaging superoxide radicals, a key form of ROS, to less damaging hydrogen peroxide that can be converted into water by catalase action. Degrades host-derived reactive oxygen species to escape innate immune surveillance. Involved in the occurrence of miconazole-tolerant persisters in biofilms. Persisters are cells that survive high doses of an antimicrobial agent. The unusual attributes of SOD5-like fungal proteins, including the absence of zinc and an open active site that readily captures extracellular copper, make these SODs well suited to meet challenges in zinc and copper availability at the host-pathogen interface. The polypeptide is Cell surface Cu-only superoxide dismutase ARB_03674 (Arthroderma benhamiae (strain ATCC MYA-4681 / CBS 112371) (Trichophyton mentagrophytes)).